We begin with the raw amino-acid sequence, 288 residues long: MKKIAIFAKVHDPRALAVAEELIEWLAARGVTAHVEEHLSKRLRRTTLAESSESTEIAADADLVVVLGGDGTLIAAARLVGERDVPILAVNLGSLGFLTEITLNELYPSVERCLAGDFEVSERMMLMASVERSGEVVELHRVLNDVVINKGALARIIDMETSVNGRYLTTFKADGLIVSTPTGSTGYSLSANGPILHPELECISLTPICPHTLTNRPLVMAADAHIAIKLKYAPDESVFLTLDGQVGMKLLSGDVVQITKAAHVTRLIQSRSKDYFEVLRTKLKWGER.

Asp-70 (proton acceptor) is an active-site residue. Residues 70–71 (DG), 144–145 (ND), Arg-155, Lys-172, Asp-174, 185–190 (TGYSLS), and Gln-245 each bind NAD(+).

This sequence belongs to the NAD kinase family. Requires a divalent metal cation as cofactor.

The protein localises to the cytoplasm. It catalyses the reaction NAD(+) + ATP = ADP + NADP(+) + H(+). Its function is as follows. Involved in the regulation of the intracellular balance of NAD and NADP, and is a key enzyme in the biosynthesis of NADP. Catalyzes specifically the phosphorylation on 2'-hydroxyl of the adenosine moiety of NAD to yield NADP. This chain is NAD kinase, found in Citrifermentans bemidjiense (strain ATCC BAA-1014 / DSM 16622 / JCM 12645 / Bem) (Geobacter bemidjiensis).